The following is a 436-amino-acid chain: GTPase Der (436 aa).

EngA-type G domains lie at 4–167 (PTVA…PVEE) and 175–351 (IRFS…ESQN). GTP is bound by residues 10 to 17 (GRPNVGKS), 57 to 61 (DTGGI), 119 to 122 (NKVD), 181 to 188 (GRPNVGKS), 229 to 233 (DTAGM), and 294 to 297 (NKWD). A KH-like domain is found at 352–436 (KRIPSAVLND…PINLIARKRK (85 aa)).

This sequence belongs to the TRAFAC class TrmE-Era-EngA-EngB-Septin-like GTPase superfamily. EngA (Der) GTPase family. In terms of assembly, associates with the 50S ribosomal subunit.

Its function is as follows. GTPase that plays an essential role in the late steps of ribosome biogenesis. In Streptococcus agalactiae serotype III (strain NEM316), this protein is GTPase Der.